The chain runs to 400 residues: Argininosuccinate synthase (400 aa).

ATP contacts are provided by residues Ala10 to Ser18 and Ala38. Tyr89 serves as a coordination point for L-citrulline. Position 119 (Gly119) interacts with ATP. L-aspartate-binding residues include Thr121, Asn125, and Asp126. Asn125 contacts L-citrulline. L-citrulline-binding residues include Arg129, Ser177, Glu262, and Tyr274.

This sequence belongs to the argininosuccinate synthase family. Type 1 subfamily. As to quaternary structure, homotetramer.

Its subcellular location is the cytoplasm. The enzyme catalyses L-citrulline + L-aspartate + ATP = 2-(N(omega)-L-arginino)succinate + AMP + diphosphate + H(+). The protein operates within amino-acid biosynthesis; L-arginine biosynthesis; L-arginine from L-ornithine and carbamoyl phosphate: step 2/3. The sequence is that of Argininosuccinate synthase from Trichodesmium erythraeum (strain IMS101).